Here is a 746-residue protein sequence, read N- to C-terminus: MGQTGKKSEKGPVCWRKRVKSEYMRLRQLKRFRRADEVKSMFSSNRQKILERTEILNQEWKQRRIQPVHILTSVSSLRGTRECSVTSDLDFPTQVIPLKTLNAVASVPIMYSWSPLQQNFMVEDETVLHNIPYMGDEVLDQDGTFIEELIKNYDGKVHGDRECGFINDEIFVELVNALGQYNDDDDDDDGDDPEEREEKQKDLEDHRDDKESRPPRKFPSDKIFEAISSMFPDKGTAEELKEKYKELTEQQLPGALPPECTPNIDGPNAKSVQREQSLHSFHTLFCRRCFKYDCFLHPFHATPNTYKRKNTETALDNKPCGPQCYQHLEGAKEFAAALTAERIKTPPKRPGGRRRGRLPNNSSRPSTPTINVLESKDTDSDREAGTETGGENNDKEEEEKKDETSSSSEANSRCQTPIKMKPNIEPPENVEWSGAEASMFRVLIGTYYDNFCAIARLIGTKTCRQVYEFRVKESSIIAPAPAEDVDTPPRKKKRKHRLWAAHCRKIQLKKDGSSNHVYNYQPCDHPRQPCDSSCPCVIAQNFCEKFCQCSSECQNRFPGCRCKAQCNTKQCPCYLAVRECDPDLCLTCGAADHWDSKNVSCKNCSIQRGSKKHLLLAPSDVAGWGIFIKDPVQKNEFISEYCGEIISQDEADRRGKVYDKYMCSFLFNLNNDFVVDATRKGNKIRFANHSVNPNCYAKVMMVNGDHRIGIFAKRAIQTGEELFFDYRYSQADALKYVGIEREMEIP.

Residues 1 to 340 form an interaction with DNMT1, DNMT3A and DNMT3B region; it reads MGQTGKKSEK…AKEFAAALTA (340 aa). Position 21 is a phosphoserine; by PKB/AKT1 (Ser-21). Residues 39 to 68 are interaction with EED; sequence KSMFSSNRQKILERTEILNQEWKQRRIQPV. An O-linked (GlcNAc) serine glycan is attached at Ser-75. Ser-76 carries the post-translational modification Phosphoserine. The segment at 180 to 222 is disordered; it reads QYNDDDDDDDGDDPEEREEKQKDLEDHRDDKESRPPRKFPSDK. Positions 182–195 are enriched in acidic residues; it reads NDDDDDDDGDDPEE. Positions 196–222 are enriched in basic and acidic residues; it reads REEKQKDLEDHRDDKESRPPRKFPSDK. The interaction with CDYL stretch occupies residues 329 to 522; the sequence is EGAKEFAAAL…SSNHVYNYQP (194 aa). Thr-339 is subject to Phosphothreonine. Residues 340-426 are disordered; sequence AERIKTPPKR…PIKMKPNIEP (87 aa). Phosphothreonine; by CDK1 and CDK2 is present on Thr-345. Residues 345–357 are compositionally biased toward basic residues; that stretch reads TPPKRPGGRRRGR. Residues Ser-363 and Ser-366 each carry the phosphoserine modification. Residue Thr-367 is modified to Phosphothreonine. Basic and acidic residues predominate over residues 374-385; the sequence is ESKDTDSDREAG. At Thr-487 the chain carries Phosphothreonine. The CXC domain occupies 503-605; that stretch reads CRKIQLKKDG…SKNVSCKNCS (103 aa). The 116-residue stretch at 612-727 folds into the SET domain; it reads KHLLLAPSDV…TGEELFFDYR (116 aa). Residue Lys-634 forms a Glycyl lysine isopeptide (Lys-Gly) (interchain with G-Cter in SUMO2) linkage.

Belongs to the class V-like SAM-binding methyltransferase superfamily. Histone-lysine methyltransferase family. EZ subfamily. Component of the PRC2/EED-EZH2 complex, which includes EED, EZH2, SUZ12, RBBP4 and RBBP7 and possibly AEBP2. The minimum components required for methyltransferase activity of the PRC2/EED-EZH2 complex are EED, EZH2 and SUZ12. The PRC2 complex may also interact with DNMT1, DNMT3A, DNMT3B and PHF1 via the EZH2 subunit and with SIRT1 via the SUZ12 subunit. Interacts with HDAC1 and HDAC2. Binds ATRX via the SET domain. Interacts with PRAME. Interacts with CDYL. Interacts with CLOCK, BMAL1 and CRY1. Interacts with DNMT3L; the interaction is direct. Interacts with EZHIP; the interaction blocks EZH2 methyltransferase activity. Interacts with ZNF263; recruited to the SIX3 promoter along with other proteins involved in chromatin modification and transcriptional corepression where it contributes to transcriptional repression. Interacts with ARMC12. Interacts with ZMYND8; the interaction is dependent on the presence of chromatin. Interacts with DDX18; this interaction inhibits the PRC2 complex. In terms of processing, phosphorylated by AKT1. Phosphorylation by AKT1 reduces methyltransferase activity. Phosphorylation at Thr-345 by CDK1 and CDK2 promotes maintenance of H3K27me3 levels at EZH2-target loci, thus leading to epigenetic gene silencing. Post-translationally, sumoylated. Glycosylated: O-GlcNAcylation at Ser-75 by OGT increases stability of EZH2 and facilitates the formation of H3K27me3 by the PRC2/EED-EZH2 complex. As to expression, in the ovary, expressed in primordial follicles and oocytes and also in external follicle cells (at protein level). Expressed in many tissues. Overexpressed in numerous tumor types including carcinomas of the breast, colon, larynx, lymphoma and testis.

Its subcellular location is the nucleus. The catalysed reaction is L-lysyl(27)-[histone H3] + 3 S-adenosyl-L-methionine = N(6),N(6),N(6)-trimethyl-L-lysyl(27)-[histone H3] + 3 S-adenosyl-L-homocysteine + 3 H(+). Its function is as follows. Polycomb group (PcG) protein. Catalytic subunit of the PRC2/EED-EZH2 complex, which methylates 'Lys-9' (H3K9me) and 'Lys-27' (H3K27me) of histone H3, leading to transcriptional repression of the affected target gene. Able to mono-, di- and trimethylate 'Lys-27' of histone H3 to form H3K27me1, H3K27me2 and H3K27me3, respectively. Displays a preference for substrates with less methylation, loses activity when progressively more methyl groups are incorporated into H3K27, H3K27me0 &gt; H3K27me1 &gt; H3K27me2. Compared to EZH1-containing complexes, it is more abundant in embryonic stem cells and plays a major role in forming H3K27me3, which is required for embryonic stem cell identity and proper differentiation. The PRC2/EED-EZH2 complex may also serve as a recruiting platform for DNA methyltransferases, thereby linking two epigenetic repression systems. Genes repressed by the PRC2/EED-EZH2 complex include HOXC8, HOXA9, MYT1, CDKN2A and retinoic acid target genes. EZH2 can also methylate non-histone proteins such as the transcription factor GATA4 and the nuclear receptor RORA. Regulates the circadian clock via histone methylation at the promoter of the circadian genes. Essential for the CRY1/2-mediated repression of the transcriptional activation of PER1/2 by the CLOCK-BMAL1 heterodimer; involved in the di and trimethylation of 'Lys-27' of histone H3 on PER1/2 promoters which is necessary for the CRY1/2 proteins to inhibit transcription. This chain is Histone-lysine N-methyltransferase EZH2, found in Homo sapiens (Human).